We begin with the raw amino-acid sequence, 181 residues long: Photosystem I assembly protein Ycf4 (181 aa).

The next 2 membrane-spanning stretches (helical) occupy residues 19 to 39 and 62 to 82; these read YFWA…GISS and VMMF…LTII.

It belongs to the Ycf4 family.

It localises to the plastid. The protein resides in the chloroplast thylakoid membrane. Functionally, seems to be required for the assembly of the photosystem I complex. This chain is Photosystem I assembly protein Ycf4, found in Phaeodactylum tricornutum (strain CCAP 1055/1).